The sequence spans 289 residues: Energy-coupling factor transporter ATP-binding protein EcfA2 (289 aa).

One can recognise an ABC transporter domain in the interval 7 to 251 (IILDNVSYTY…IELLTKIEID (245 aa)). 44-51 (GTTGSGKS) contacts ATP.

This sequence belongs to the ABC transporter superfamily. Energy-coupling factor EcfA family. As to quaternary structure, forms a stable energy-coupling factor (ECF) transporter complex composed of 2 membrane-embedded substrate-binding proteins (S component), 2 ATP-binding proteins (A component) and 2 transmembrane proteins (T component).

The protein resides in the cell membrane. Functionally, ATP-binding (A) component of a common energy-coupling factor (ECF) ABC-transporter complex. Unlike classic ABC transporters this ECF transporter provides the energy necessary to transport a number of different substrates. This chain is Energy-coupling factor transporter ATP-binding protein EcfA2, found in Mycoplasma capricolum subsp. capricolum (strain California kid / ATCC 27343 / NCTC 10154).